The chain runs to 182 residues: uncharacterized protein (182 aa).

BNR repeat units lie at residues Trp-58–Thr-69 and Tyr-102–Ala-113.

This is an uncharacterized protein from Saccharomyces cerevisiae (strain ATCC 204508 / S288c) (Baker's yeast).